The sequence spans 525 residues: Zinc finger C2HC domain-containing protein 1C (525 aa).

A compositionally biased stretch (basic and acidic residues) spans 23–34 (AHGLHSAKHDPY). Disordered stretches follow at residues 23-48 (AHGL…MGHL), 85-107 (CPHS…GKGL), and 145-171 (VHRK…PDSS). A compositionally biased stretch (polar residues) spans 36–48 (QSDSPQRSSMGHL). Positions 90–102 (GISQQGSGNNAQG) are enriched in low complexity. Positions 207–252 (TQIQRLEAAGESLQKEIRRKEILLREKLKKTEEGLRRIQREKKQAI) form a coiled coil. Disordered stretches follow at residues 292-316 (SRNR…LSDY), 330-349 (NNKI…SQPA), and 356-379 (LQAS…EQEL). A compositionally biased stretch (polar residues) spans 301 to 312 (CEQAQENSSPLQ). Low complexity predominate over residues 359-373 (SSLSGTPGSSGSSSS). 2 C2HC/C3H-type zinc fingers span residues 378–407 (ELGK…MQGS) and 487–516 (DYVQ…IKNR). Positions 382, 385, 397, 401, 491, 494, 506, and 510 each coordinate Zn(2+).

The protein belongs to the ZC2HC1 family. Zn(2+) is required as a cofactor.

This Rattus norvegicus (Rat) protein is Zinc finger C2HC domain-containing protein 1C (Zc2hc1c).